Here is a 421-residue protein sequence, read N- to C-terminus: Diaminobutyrate--2-oxoglutarate transaminase (421 aa).

At K262 the chain carries N6-(pyridoxal phosphate)lysine.

The protein belongs to the class-III pyridoxal-phosphate-dependent aminotransferase family. Pyridoxal 5'-phosphate is required as a cofactor.

It carries out the reaction L-2,4-diaminobutanoate + 2-oxoglutarate = L-aspartate 4-semialdehyde + L-glutamate. It functions in the pathway amine and polyamine biosynthesis; ectoine biosynthesis; L-ectoine from L-aspartate 4-semialdehyde: step 1/3. In terms of biological role, catalyzes reversively the conversion of L-aspartate beta-semialdehyde (ASA) to L-2,4-diaminobutyrate (DABA) by transamination with L-glutamate. This is Diaminobutyrate--2-oxoglutarate transaminase (ectB) from Vibrio parahaemolyticus serotype O3:K6 (strain RIMD 2210633).